Reading from the N-terminus, the 170-residue chain is MSQLPVVLGAGLNTGDIIFQLIAMLILLALLKKFALKPLLGIMKQREDYIGNEISSAEQKHVQAEKLLEEQRVLLKEAREESHTLIENAKKIGEKQKEEIIQAARQESERLKDSARTEIVKEKEQAVAALREQVASLSVLIASKVIERELDEQAQEKLIQEYLKEAGESR.

The chain crosses the membrane as a helical span at residues 11–31; it reads GLNTGDIIFQLIAMLILLALL.

The protein belongs to the ATPase B chain family. F-type ATPases have 2 components, F(1) - the catalytic core - and F(0) - the membrane proton channel. F(1) has five subunits: alpha(3), beta(3), gamma(1), delta(1), epsilon(1). F(0) has three main subunits: a(1), b(2) and c(10-14). The alpha and beta chains form an alternating ring which encloses part of the gamma chain. F(1) is attached to F(0) by a central stalk formed by the gamma and epsilon chains, while a peripheral stalk is formed by the delta and b chains.

It localises to the cell membrane. Its function is as follows. F(1)F(0) ATP synthase produces ATP from ADP in the presence of a proton or sodium gradient. F-type ATPases consist of two structural domains, F(1) containing the extramembraneous catalytic core and F(0) containing the membrane proton channel, linked together by a central stalk and a peripheral stalk. During catalysis, ATP synthesis in the catalytic domain of F(1) is coupled via a rotary mechanism of the central stalk subunits to proton translocation. In terms of biological role, component of the F(0) channel, it forms part of the peripheral stalk, linking F(1) to F(0). This is ATP synthase subunit b from Bacillus pumilus (strain SAFR-032).